The primary structure comprises 573 residues: Isocitrate dehydrogenase kinase/phosphatase (573 aa).

ATP is bound by residues Ala-318–Met-324 and Lys-339. The active site involves Asp-374.

The protein belongs to the AceK family.

The protein localises to the cytoplasm. The enzyme catalyses L-seryl-[isocitrate dehydrogenase] + ATP = O-phospho-L-seryl-[isocitrate dehydrogenase] + ADP + H(+). Bifunctional enzyme which can phosphorylate or dephosphorylate isocitrate dehydrogenase (IDH) on a specific serine residue. This is a regulatory mechanism which enables bacteria to bypass the Krebs cycle via the glyoxylate shunt in response to the source of carbon. When bacteria are grown on glucose, IDH is fully active and unphosphorylated, but when grown on acetate or ethanol, the activity of IDH declines drastically concomitant with its phosphorylation. This is Isocitrate dehydrogenase kinase/phosphatase from Stutzerimonas stutzeri (strain A1501) (Pseudomonas stutzeri).